We begin with the raw amino-acid sequence, 61 residues long: Temporin-SN2 (61 aa).

Positions 1–22 (MFTLKKTLLLLFFLGTINLSLC) are cleaved as a signal peptide. The propeptide at 23–44 (EEERNAEEERRDGDDEMDVEVK) is removed in mature form. A Lysine amide modification is found at K61.

This sequence belongs to the frog skin active peptide (FSAP) family. Temporin subfamily. In terms of tissue distribution, expressed by the skin glands.

It is found in the secreted. In terms of biological role, antimicrobial peptide. Active against some Gram-positive and Gram-negative bacterial strains. Active against fungus C.glabrata 090902 but not against C.albicans ATCC 12231. Shows very weak hemolytic activity against human erythrocytes. This Sylvirana spinulosa (Fine-spined frog) protein is Temporin-SN2.